Consider the following 410-residue polypeptide: Na(+)-translocating NADH-quinone reductase subunit B (410 aa).

3 helical membrane passes run 56 to 76 (MMIL…YNVG), 119 to 139 (LFGA…GGFW), and 159 to 179 (SILF…ALGI). Residue threonine 232 is modified to FMN phosphoryl threonine. A run of 5 helical transmembrane segments spans residues 266 to 286 (GSIG…IVFA), 293 to 313 (IIAG…FIGS), 318 to 338 (MFAM…GMLF), 347 to 367 (SFTN…CVLI), and 377 to 397 (GMML…YFVA).

It belongs to the NqrB/RnfD family. In terms of assembly, composed of six subunits; NqrA, NqrB, NqrC, NqrD, NqrE and NqrF. Requires FMN as cofactor.

It localises to the cell inner membrane. The catalysed reaction is a ubiquinone + n Na(+)(in) + NADH + H(+) = a ubiquinol + n Na(+)(out) + NAD(+). NQR complex catalyzes the reduction of ubiquinone-1 to ubiquinol by two successive reactions, coupled with the transport of Na(+) ions from the cytoplasm to the periplasm. NqrA to NqrE are probably involved in the second step, the conversion of ubisemiquinone to ubiquinol. The protein is Na(+)-translocating NADH-quinone reductase subunit B of Neisseria meningitidis serogroup B (strain ATCC BAA-335 / MC58).